We begin with the raw amino-acid sequence, 305 residues long: UDP-3-O-acyl-N-acetylglucosamine deacetylase (305 aa).

Residues H79, H238, and D242 each coordinate Zn(2+). The active-site Proton donor is the H265.

The protein belongs to the LpxC family. Zn(2+) serves as cofactor.

The enzyme catalyses a UDP-3-O-[(3R)-3-hydroxyacyl]-N-acetyl-alpha-D-glucosamine + H2O = a UDP-3-O-[(3R)-3-hydroxyacyl]-alpha-D-glucosamine + acetate. It functions in the pathway glycolipid biosynthesis; lipid IV(A) biosynthesis; lipid IV(A) from (3R)-3-hydroxytetradecanoyl-[acyl-carrier-protein] and UDP-N-acetyl-alpha-D-glucosamine: step 2/6. Functionally, catalyzes the hydrolysis of UDP-3-O-myristoyl-N-acetylglucosamine to form UDP-3-O-myristoylglucosamine and acetate, the committed step in lipid A biosynthesis. The polypeptide is UDP-3-O-acyl-N-acetylglucosamine deacetylase (Pectobacterium atrosepticum (strain SCRI 1043 / ATCC BAA-672) (Erwinia carotovora subsp. atroseptica)).